The sequence spans 538 residues: Protein NRT1/ PTR FAMILY 5.11 (538 aa).

The next 2 helical transmembrane spans lie at 44–64 (FAYF…LGES) and 74–94 (AWTG…DSYL). Threonine 99 carries the phosphothreonine modification. The next 10 helical transmembrane spans lie at 100 to 120 (IIIS…STMI), 134 to 154 (TIFF…NPCI), 175 to 194 (SFFN…TRLV), 204 to 224 (WSLG…LFLL), 308 to 328 (IPIW…PTFF), 342 to 362 (GLLV…VVFI), 389 to 409 (IGTG…VETK), 424 to 444 (VWWL…TMVG), 463 to 483 (ALNL…ISVI), and 507 to 527 (YFYW…LWFA).

This sequence belongs to the major facilitator superfamily. Proton-dependent oligopeptide transporter (POT/PTR) (TC 2.A.17) family. Expressed in shoots and roots.

The protein resides in the membrane. This Arabidopsis thaliana (Mouse-ear cress) protein is Protein NRT1/ PTR FAMILY 5.11 (NPF5.11).